Here is a 443-residue protein sequence, read N- to C-terminus: Chromosomal replication initiator protein DnaA (443 aa).

Positions 1–80 (MTSQFASLWQ…LGESVEVRFF (80 aa)) are domain I, interacts with DnaA modulators. A domain II region spans residues 80–104 (FTPSADSRRSEPSRRPVATEESSPP). The segment at 83–105 (SADSRRSEPSRRPVATEESSPPL) is disordered. Residues 85 to 97 (DSRRSEPSRRPVA) are compositionally biased toward basic and acidic residues. The domain III, AAA+ region stretch occupies residues 105–321 (LLNPKYTFDT…GALNRVIAYA (217 aa)). Positions 149, 151, 152, and 153 each coordinate ATP. The domain IV, binds dsDNA stretch occupies residues 322-443 (NLSGKSLTSE…QVLKEKIQRA (122 aa)).

Belongs to the DnaA family. Oligomerizes as a right-handed, spiral filament on DNA at oriC.

It localises to the cytoplasm. Functionally, plays an essential role in the initiation and regulation of chromosomal replication. ATP-DnaA binds to the origin of replication (oriC) to initiate formation of the DNA replication initiation complex once per cell cycle. Binds the DnaA box (a 9 base pair repeat at the origin) and separates the double-stranded (ds)DNA. Forms a right-handed helical filament on oriC DNA; dsDNA binds to the exterior of the filament while single-stranded (ss)DNA is stabiized in the filament's interior. The ATP-DnaA-oriC complex binds and stabilizes one strand of the AT-rich DNA unwinding element (DUE), permitting loading of DNA polymerase. After initiation quickly degrades to an ADP-DnaA complex that is not apt for DNA replication. Binds acidic phospholipids. The polypeptide is Chromosomal replication initiator protein DnaA (Heliobacterium modesticaldum (strain ATCC 51547 / Ice1)).